We begin with the raw amino-acid sequence, 115 residues long: Large ribosomal subunit protein uL22 (115 aa).

It belongs to the universal ribosomal protein uL22 family. In terms of assembly, part of the 50S ribosomal subunit.

This protein binds specifically to 23S rRNA; its binding is stimulated by other ribosomal proteins, e.g. L4, L17, and L20. It is important during the early stages of 50S assembly. It makes multiple contacts with different domains of the 23S rRNA in the assembled 50S subunit and ribosome. Its function is as follows. The globular domain of the protein is located near the polypeptide exit tunnel on the outside of the subunit, while an extended beta-hairpin is found that lines the wall of the exit tunnel in the center of the 70S ribosome. The chain is Large ribosomal subunit protein uL22 from Coxiella burnetii (strain CbuG_Q212) (Coxiella burnetii (strain Q212)).